We begin with the raw amino-acid sequence, 516 residues long: Probable rhamnogalacturonase B (516 aa).

The signal sequence occupies residues 1 to 21 (MRLHAFTLLSLLGLVPSFAAA). A disulfide bridge connects residues Cys42 and Cys68. Residue Asn145 is glycosylated (N-linked (GlcNAc...) asparagine). Residue Asp219 is the Proton donor of the active site. Cys221 and Cys238 are joined by a disulfide. N-linked (GlcNAc...) asparagine glycosylation occurs at Asn239. His294 is an active-site residue. A glycan (N-linked (GlcNAc...) asparagine) is linked at Asn321. 2 disulfides stabilise this stretch: Cys344–Cys350 and Cys372–Cys381. The disordered stretch occupies residues 462 to 516 (ETPAAASRSEQVVQGASQETSQPAPESAGPVRSVPTGGNRPSRHRHGHHHFWIAA). Positions 469-485 (RSEQVVQGASQETSQPA) are enriched in polar residues. Positions 502–516 (PSRHRHGHHHFWIAA) are enriched in basic residues.

This sequence belongs to the glycosyl hydrolase 28 family.

It is found in the secreted. It catalyses the reaction Endohydrolysis of alpha-D-GalA-(1-&gt;2)-alpha-L-Rha glycosidic bond in the rhamnogalacturonan I backbone with initial inversion of anomeric configuration releasing oligosaccharides with beta-D-GalA at the reducing end.. In terms of biological role, pectinolytic enzymes consist of four classes of enzymes: pectine lyase, polygalacturonase, pectin methylesterase and rhamnogalacturonase. Hydrolyzes alpha-D-galacturonopyranosyl-(1,2)-alpha-L-rhamnopyranosyl linkages in the backbone of the hairy regions of pectins. This Neosartorya fischeri (strain ATCC 1020 / DSM 3700 / CBS 544.65 / FGSC A1164 / JCM 1740 / NRRL 181 / WB 181) (Aspergillus fischerianus) protein is Probable rhamnogalacturonase B (rhgB).